Here is a 321-residue protein sequence, read N- to C-terminus: Glucokinase (321 aa).

Residue 8–13 (GDVGGT) participates in ATP binding.

This sequence belongs to the bacterial glucokinase family.

The protein localises to the cytoplasm. The catalysed reaction is D-glucose + ATP = D-glucose 6-phosphate + ADP + H(+). The polypeptide is Glucokinase (Salmonella paratyphi B (strain ATCC BAA-1250 / SPB7)).